A 345-amino-acid polypeptide reads, in one-letter code: Uroporphyrinogen decarboxylase (345 aa).

Substrate contacts are provided by residues 28–32, Asp77, Tyr153, Ser208, and His322; that span reads RQAGR.

It belongs to the uroporphyrinogen decarboxylase family. In terms of assembly, homodimer.

It localises to the cytoplasm. It catalyses the reaction uroporphyrinogen III + 4 H(+) = coproporphyrinogen III + 4 CO2. It functions in the pathway porphyrin-containing compound metabolism; protoporphyrin-IX biosynthesis; coproporphyrinogen-III from 5-aminolevulinate: step 4/4. In terms of biological role, catalyzes the decarboxylation of four acetate groups of uroporphyrinogen-III to yield coproporphyrinogen-III. The protein is Uroporphyrinogen decarboxylase of Solibacter usitatus (strain Ellin6076).